The primary structure comprises 91 residues: UPF0250 protein Psyr_4360 (91 aa).

It belongs to the UPF0250 family.

In Pseudomonas syringae pv. syringae (strain B728a), this protein is UPF0250 protein Psyr_4360.